A 540-amino-acid chain; its full sequence is Chaperonin GroEL (540 aa).

ATP contacts are provided by residues Thr30 to Pro33, Lys51, Asp87 to Thr91, Gly415, Asn479 to Ala481, and Asp495.

It belongs to the chaperonin (HSP60) family. Forms a cylinder of 14 subunits composed of two heptameric rings stacked back-to-back. Interacts with the co-chaperonin GroES.

The protein localises to the cytoplasm. The enzyme catalyses ATP + H2O + a folded polypeptide = ADP + phosphate + an unfolded polypeptide.. Together with its co-chaperonin GroES, plays an essential role in assisting protein folding. The GroEL-GroES system forms a nano-cage that allows encapsulation of the non-native substrate proteins and provides a physical environment optimized to promote and accelerate protein folding. This Pectobacterium carotovorum subsp. carotovorum (Erwinia carotovora subsp. carotovora) protein is Chaperonin GroEL.